Consider the following 335-residue polypeptide: Biotin synthase (335 aa).

The Radical SAM core domain maps to 46–274; it reads YDIQLASLFS…KSKIRLSAGR (229 aa). 3 residues coordinate [4Fe-4S] cluster: Cys-61, Cys-65, and Cys-68. [2Fe-2S] cluster is bound by residues Cys-105, Cys-137, Cys-197, and Arg-269.

Belongs to the radical SAM superfamily. Biotin synthase family. As to quaternary structure, homodimer. Requires [4Fe-4S] cluster as cofactor. [2Fe-2S] cluster is required as a cofactor.

It carries out the reaction (4R,5S)-dethiobiotin + (sulfur carrier)-SH + 2 reduced [2Fe-2S]-[ferredoxin] + 2 S-adenosyl-L-methionine = (sulfur carrier)-H + biotin + 2 5'-deoxyadenosine + 2 L-methionine + 2 oxidized [2Fe-2S]-[ferredoxin]. It functions in the pathway cofactor biosynthesis; biotin biosynthesis; biotin from 7,8-diaminononanoate: step 2/2. Catalyzes the conversion of dethiobiotin (DTB) to biotin by the insertion of a sulfur atom into dethiobiotin via a radical-based mechanism. The protein is Biotin synthase of Prochlorococcus marinus (strain MIT 9215).